The sequence spans 339 residues: DNA-directed RNA polymerase subunit alpha (339 aa).

Residues 1-233 are alpha N-terminal domain (alpha-NTD); sequence MVREEVAGST…DLFLPFLHAE (233 aa). The interval 264 to 339 is alpha C-terminal domain (alpha-CTD); it reads KKGIPLNCIF…IDLLKNKLSF (76 aa).

Belongs to the RNA polymerase alpha chain family. In terms of assembly, in plastids the minimal PEP RNA polymerase catalytic core is composed of four subunits: alpha, beta, beta', and beta''. When a (nuclear-encoded) sigma factor is associated with the core the holoenzyme is formed, which can initiate transcription.

The protein resides in the plastid. It is found in the chloroplast. It carries out the reaction RNA(n) + a ribonucleoside 5'-triphosphate = RNA(n+1) + diphosphate. Its function is as follows. DNA-dependent RNA polymerase catalyzes the transcription of DNA into RNA using the four ribonucleoside triphosphates as substrates. This chain is DNA-directed RNA polymerase subunit alpha, found in Festucopsis serpentini.